We begin with the raw amino-acid sequence, 160 residues long: Major pollen allergen Bet v 1-C (160 aa).

Brassinolide is bound by residues K55, Y82, Y84, and N101.

Belongs to the BetVI family.

It localises to the cytoplasm. In terms of biological role, may be a general steroid carrier protein. This chain is Major pollen allergen Bet v 1-C (BETV1C), found in Betula pendula (European white birch).